The following is a 251-amino-acid chain: Glucosamine-6-phosphate deaminase (251 aa).

Catalysis depends on aspartate 67, which acts as the Proton acceptor; for enolization step. The For ring-opening step role is filled by asparagine 136. Residue histidine 138 is the Proton acceptor; for ring-opening step of the active site. The active-site For ring-opening step is glutamate 143.

This sequence belongs to the glucosamine/galactosamine-6-phosphate isomerase family. NagB subfamily.

It carries out the reaction alpha-D-glucosamine 6-phosphate + H2O = beta-D-fructose 6-phosphate + NH4(+). It functions in the pathway amino-sugar metabolism; N-acetylneuraminate degradation; D-fructose 6-phosphate from N-acetylneuraminate: step 5/5. Its function is as follows. Catalyzes the reversible isomerization-deamination of glucosamine 6-phosphate (GlcN6P) to form fructose 6-phosphate (Fru6P) and ammonium ion. The polypeptide is Glucosamine-6-phosphate deaminase (Geobacillus sp. (strain WCH70)).